The sequence spans 334 residues: Glycerol-3-phosphate dehydrogenase [NAD(P)+] (334 aa).

Residues tryptophan 13, arginine 33, and lysine 106 each coordinate NADPH. Residues lysine 106, glycine 137, and serine 139 each coordinate sn-glycerol 3-phosphate. NADPH is bound at residue alanine 141. Residues lysine 192, aspartate 245, serine 255, arginine 256, and asparagine 257 each contribute to the sn-glycerol 3-phosphate site. Lysine 192 functions as the Proton acceptor in the catalytic mechanism. Residue arginine 256 participates in NADPH binding. NADPH-binding residues include valine 280 and glutamate 282.

The protein belongs to the NAD-dependent glycerol-3-phosphate dehydrogenase family.

It localises to the cytoplasm. The enzyme catalyses sn-glycerol 3-phosphate + NAD(+) = dihydroxyacetone phosphate + NADH + H(+). It carries out the reaction sn-glycerol 3-phosphate + NADP(+) = dihydroxyacetone phosphate + NADPH + H(+). It functions in the pathway membrane lipid metabolism; glycerophospholipid metabolism. Functionally, catalyzes the reduction of the glycolytic intermediate dihydroxyacetone phosphate (DHAP) to sn-glycerol 3-phosphate (G3P), the key precursor for phospholipid synthesis. This chain is Glycerol-3-phosphate dehydrogenase [NAD(P)+], found in Chlamydia trachomatis serovar A (strain ATCC VR-571B / DSM 19440 / HAR-13).